Consider the following 1144-residue polypeptide: ATP-dependent helicase/deoxyribonuclease subunit B (1144 aa).

Residues Met1–Val276 enclose the UvrD-like helicase ATP-binding domain. Gly8–Ser15 provides a ligand contact to ATP. Positions Arg274–Ser584 constitute a UvrD-like helicase C-terminal domain. [4Fe-4S] cluster-binding residues include Cys784, Cys1102, Cys1105, and Cys1111.

It belongs to the helicase family. AddB/RexB type 1 subfamily. In terms of assembly, heterodimer of AddA and AddB. Requires Mg(2+) as cofactor. The cofactor is [4Fe-4S] cluster.

The heterodimer acts as both an ATP-dependent DNA helicase and an ATP-dependent, dual-direction single-stranded exonuclease. Recognizes the chi site generating a DNA molecule suitable for the initiation of homologous recombination. The AddB subunit has 5' -&gt; 3' nuclease activity but not helicase activity. The polypeptide is ATP-dependent helicase/deoxyribonuclease subunit B (Alkaliphilus oremlandii (strain OhILAs) (Clostridium oremlandii (strain OhILAs))).